The sequence spans 190 residues: Xanthine phosphoribosyltransferase (190 aa).

Xanthine contacts are provided by Leu20 and Asn27. 128 to 132 (ANGHA) serves as a coordination point for 5-phospho-alpha-D-ribose 1-diphosphate. A xanthine-binding site is contributed by Lys156.

The protein belongs to the purine/pyrimidine phosphoribosyltransferase family. Xpt subfamily. As to quaternary structure, homodimer.

It is found in the cytoplasm. It carries out the reaction XMP + diphosphate = xanthine + 5-phospho-alpha-D-ribose 1-diphosphate. It participates in purine metabolism; XMP biosynthesis via salvage pathway; XMP from xanthine: step 1/1. In terms of biological role, converts the preformed base xanthine, a product of nucleic acid breakdown, to xanthosine 5'-monophosphate (XMP), so it can be reused for RNA or DNA synthesis. This Ectopseudomonas mendocina (strain ymp) (Pseudomonas mendocina) protein is Xanthine phosphoribosyltransferase.